Reading from the N-terminus, the 969-residue chain is Defective in germ line development protein 3 (969 aa).

The gld-2-binding stretch occupies residues 34–81 (MAENAASARKLFVSSALKDIIVNPENFYHDFQQSAQMAEDANQRRQVS). KH domains are found at residues 34–109 (MAEN…MIEI), 113–187 (RVTL…MRRN), 189–259 (HFTV…NEIL), 270–342 (FTLH…IMDL), and 344–419 (PISM…YQKV). The segment at 57-471 (PENFYHDFQQ…GSNGRRHRSS (415 aa)) is gls-1-binding. Disordered regions lie at residues 459–508 (LSDG…SFSE) and 602–711 (EQHR…GDIH). The segment covering 487 to 508 (KQFSESSGGPSRSHTRVSSFSE) has biased composition (polar residues). Over residues 631–644 (PSSSTGSYYPSTTP) the composition is skewed to low complexity. A compositionally biased stretch (basic and acidic residues) spans 647–659 (RVYEQVREDDLRS). Residues 664 to 676 (RRTSVNGDDQNVE) are compositionally biased toward polar residues. Basic and acidic residues-rich tracts occupy residues 677 to 687 (SMHDQGYERQY) and 694 to 711 (LQKD…GDIH). Residues 769 to 969 (LYMHESPHND…DLSLDETSTY (201 aa)) are gls-1-binding. A fbf-1-binding region spans residues 860–949 (NGVTKTILEP…VLNEKEKEIA (90 aa)). A disordered region spans residues 950–969 (DKSIESTVTQDLSLDETSTY). The segment covering 954-969 (ESTVTQDLSLDETSTY) has biased composition (polar residues).

As to quaternary structure, interacts (via its KH1 domain) with gld-2. Isoform A but not isoform B interacts specifically with fbf-1 and fbf-2 in an RNA-independent manner. Isoform A interacts with gls-1 isoform C. In terms of tissue distribution, expressed in the germline (at protein level). In adult hermaphrodites, first detected in the transition zone (TZ), weakly expressed in the early mitotic region and in pachytene germ cells, and becomes more abundantly expressed as germ cells enter diakinesis (at protein level). Expressed in primary spermatocytes, but not in secondary spermatocytes or adult sperm (at protein level).

The protein resides in the cytoplasm. Its subcellular location is the cytoplasmic granule. The protein localises to the perinuclear region. Functionally, required maternally for germline survival and embryogenesis. Forms a complex with gls-1 which promotes the oogenic cell fate by freeing the translational repressor fbf to repress sperm promoting factors. Promotes maturation of primary spermatocytes to mature sperm. Required during hermaphrodite development to promote sperm fate, which is critical for determining the normal number of sperm. Promotion of sperm fate is at the expense of oogenesis, possibly through the negative regulation of fbf. Required during male development for the continued production of sperm and inhibition of oogenesis. Together with gld-2, promotes the transition from mitosis to meiosis. Required for polyadenylation of neg-1 mRNA during embryogenesis. The protein is Defective in germ line development protein 3 of Caenorhabditis elegans.